The following is a 298-amino-acid chain: Inosose dehydratase (298 aa).

The protein belongs to the IolE/MocC family. Requires glutathione as cofactor. The cofactor is Co(2+). Mn(2+) is required as a cofactor.

It catalyses the reaction scyllo-inosose = 3D-3,5/4-trihydroxycyclohexane-1,2-dione + H2O. It participates in polyol metabolism; myo-inositol degradation into acetyl-CoA; acetyl-CoA from myo-inositol: step 2/7. Catalyzes the dehydration of inosose (2-keto-myo-inositol, 2KMI or 2,4,6/3,5-pentahydroxycyclohexanone) to 3D-(3,5/4)-trihydroxycyclohexane-1,2-dione (D-2,3-diketo-4-deoxy-epi-inositol). In Bacillus velezensis (strain DSM 23117 / BGSC 10A6 / LMG 26770 / FZB42) (Bacillus amyloliquefaciens subsp. plantarum), this protein is Inosose dehydratase.